The primary structure comprises 319 residues: 1-aminocyclopropane-1-carboxylate oxidase 1 (319 aa).

Residues 153-253 (PNFGTKVSNY…RMSLASFYNP (101 aa)) enclose the Fe2OG dioxygenase domain. His177, Asp179, and His234 together coordinate Fe cation.

It belongs to the iron/ascorbate-dependent oxidoreductase family. It depends on Fe cation as a cofactor.

The catalysed reaction is 1-aminocyclopropane-1-carboxylate + L-ascorbate + O2 = ethene + L-dehydroascorbate + hydrogen cyanide + CO2 + 2 H2O. Its pathway is alkene biosynthesis; ethylene biosynthesis via S-adenosyl-L-methionine; ethylene from S-adenosyl-L-methionine: step 2/2. This is 1-aminocyclopropane-1-carboxylate oxidase 1 (ACO1) from Petunia hybrida (Petunia).